We begin with the raw amino-acid sequence, 338 residues long: Large ribosomal subunit protein uL10 (338 aa).

Residues 297-338 (PSAQQTQTQQSTAEEKKEEKKEEEKKGPSEEEIGSGLASLFG) are disordered. Over residues 298–308 (SAQQTQTQQST) the composition is skewed to low complexity. Positions 309 to 325 (AEEKKEEKKEEEKKGPS) are enriched in basic and acidic residues.

The protein belongs to the universal ribosomal protein uL10 family. As to quaternary structure, part of the 50S ribosomal subunit. Forms part of the ribosomal stalk which helps the ribosome interact with GTP-bound translation factors. Forms a heptameric L10(L12)2(L12)2(L12)2 complex, where L10 forms an elongated spine to which the L12 dimers bind in a sequential fashion.

In terms of biological role, forms part of the ribosomal stalk, playing a central role in the interaction of the ribosome with GTP-bound translation factors. This Saccharolobus islandicus (strain M.14.25 / Kamchatka #1) (Sulfolobus islandicus) protein is Large ribosomal subunit protein uL10.